The sequence spans 427 residues: Enolase (427 aa).

Residue Q163 coordinates (2R)-2-phosphoglycerate. The active-site Proton donor is the E205. Mg(2+)-binding residues include D242, E285, and D312. Residues K337, R366, S367, and K388 each contribute to the (2R)-2-phosphoglycerate site. K337 serves as the catalytic Proton acceptor.

It belongs to the enolase family. Mg(2+) is required as a cofactor.

It localises to the cytoplasm. The protein localises to the secreted. Its subcellular location is the cell surface. The catalysed reaction is (2R)-2-phosphoglycerate = phosphoenolpyruvate + H2O. The protein operates within carbohydrate degradation; glycolysis; pyruvate from D-glyceraldehyde 3-phosphate: step 4/5. Catalyzes the reversible conversion of 2-phosphoglycerate (2-PG) into phosphoenolpyruvate (PEP). It is essential for the degradation of carbohydrates via glycolysis. The sequence is that of Enolase from Burkholderia thailandensis (strain ATCC 700388 / DSM 13276 / CCUG 48851 / CIP 106301 / E264).